Here is a 90-residue protein sequence, read N- to C-terminus: UPF0297 protein lmo1503 (90 aa).

It belongs to the UPF0297 family.

The sequence is that of UPF0297 protein lmo1503 from Listeria monocytogenes serovar 1/2a (strain ATCC BAA-679 / EGD-e).